The chain runs to 916 residues: Isoleucine--tRNA ligase (916 aa).

Positions 57-67 (PYANGNLHMGH) match the 'HIGH' region motif. Glutamate 554 contacts L-isoleucyl-5'-AMP. Positions 595-599 (KMSKS) match the 'KMSKS' region motif. Position 598 (lysine 598) interacts with ATP. Positions 885, 888, 905, and 908 each coordinate Zn(2+).

This sequence belongs to the class-I aminoacyl-tRNA synthetase family. IleS type 1 subfamily. As to quaternary structure, monomer. Zn(2+) serves as cofactor.

It is found in the cytoplasm. It carries out the reaction tRNA(Ile) + L-isoleucine + ATP = L-isoleucyl-tRNA(Ile) + AMP + diphosphate. In terms of biological role, catalyzes the attachment of isoleucine to tRNA(Ile). As IleRS can inadvertently accommodate and process structurally similar amino acids such as valine, to avoid such errors it has two additional distinct tRNA(Ile)-dependent editing activities. One activity is designated as 'pretransfer' editing and involves the hydrolysis of activated Val-AMP. The other activity is designated 'posttransfer' editing and involves deacylation of mischarged Val-tRNA(Ile). The sequence is that of Isoleucine--tRNA ligase (ileS) from Staphylococcus epidermidis (strain ATCC 35984 / DSM 28319 / BCRC 17069 / CCUG 31568 / BM 3577 / RP62A).